Here is a 264-residue protein sequence, read N- to C-terminus: Thymidylate synthase (264 aa).

Residue R21 coordinates dUMP. H51 provides a ligand contact to (6R)-5,10-methylene-5,6,7,8-tetrahydrofolate. Position 126 to 127 (126 to 127 (RR)) interacts with dUMP. Catalysis depends on C146, which acts as the Nucleophile. DUMP-binding positions include 166 to 169 (RSAD), N177, and 207 to 209 (HLY). D169 is a binding site for (6R)-5,10-methylene-5,6,7,8-tetrahydrofolate. A263 is a (6R)-5,10-methylene-5,6,7,8-tetrahydrofolate binding site.

Belongs to the thymidylate synthase family. Bacterial-type ThyA subfamily. Homodimer.

It is found in the cytoplasm. It catalyses the reaction dUMP + (6R)-5,10-methylene-5,6,7,8-tetrahydrofolate = 7,8-dihydrofolate + dTMP. It functions in the pathway pyrimidine metabolism; dTTP biosynthesis. Functionally, catalyzes the reductive methylation of 2'-deoxyuridine-5'-monophosphate (dUMP) to 2'-deoxythymidine-5'-monophosphate (dTMP) while utilizing 5,10-methylenetetrahydrofolate (mTHF) as the methyl donor and reductant in the reaction, yielding dihydrofolate (DHF) as a by-product. This enzymatic reaction provides an intracellular de novo source of dTMP, an essential precursor for DNA biosynthesis. In Hyphomonas neptunium (strain ATCC 15444), this protein is Thymidylate synthase.